A 1167-amino-acid polypeptide reads, in one-letter code: mRNA 3'-end-processing protein rna-14 (1167 aa).

The disordered stretch occupies residues 1-245 (MSDDYDPTNI…DPTPVTQPAP (245 aa)). Acidic residues-rich tracts occupy residues 16–26 (EEQEDYGEADG) and 70–79 (NTDDVGDDYD). A compositionally biased stretch (low complexity) spans 102–111 (TAPQPAAPVA). The span at 124–137 (DSDDEDEDGDDDGE) shows a compositional bias: acidic residues. 2 stretches are compositionally biased toward low complexity: residues 138 to 150 (PQQQQQQQQQQQP) and 159 to 191 (GSGASSSGGSAPAPASASATAAPQSHSPAPQTA). A compositionally biased stretch (polar residues) spans 192–218 (TLTVQDNAGATTFNAPPVPQQVSHQSG). Positions 219 to 245 (ATTAAVPTTPSSAAPAVDPTPVTQPAP) are enriched in low complexity. HAT repeat units follow at residues 277-309 (NDIDGARQVYERFLAIFPQAADIWVEYLDLELS), 311-342 (NNFPQAEGIFAKCLMTTPNVNLWTRYLDYIRR), 352-387 (QARQTVSQAYEFVIDNIGLDKDSGKIWAEYIQFIKF), 401-434 (QKMDQLRKAYQRAICVPISNVNTLWKEYDQFEMG), 471-504 (TNLPRLPPAPGFDGDQEFMEQVEIWKKWIAWEKS), and 518-550 (LYQKRILYVYNQALMALRFWPEMWVDAAQWCFD). Positions 882–893 (QQQPQLPMSQRD) are enriched in polar residues. 2 disordered regions span residues 882–980 (QQQP…SGAG) and 1075–1167 (AYRE…PPPY). Positions 908-922 (SPSAGPGAPFAPYAA) are enriched in low complexity. Residues 924–946 (RPLDDRDYDDHPRKIARSEHDPF) are compositionally biased toward basic and acidic residues. Residues 969-979 (GAAGAYSGSGA) show a composition bias toward gly residues. Residues 1079–1090 (SPGPLGGRPLSP) show a composition bias toward low complexity. The segment covering 1121–1134 (EPPPAAQYGVPPPA) has biased composition (pro residues). A compositionally biased stretch (low complexity) spans 1135 to 1151 (QYDGGWAQQQQQQQYGQ).

The protein localises to the nucleus. It localises to the cytoplasm. Functionally, component of the cleavage factor IA (CFIA) complex, which is involved in the endonucleolytic cleavage during polyadenylation-dependent pre-mRNA 3'-end formation. In Neurospora crassa (strain ATCC 24698 / 74-OR23-1A / CBS 708.71 / DSM 1257 / FGSC 987), this protein is mRNA 3'-end-processing protein rna-14 (rna-14).